A 72-amino-acid chain; its full sequence is Guanine nucleotide-binding protein subunit gamma (72 aa).

The interval 32 to 72 (MVSVAPPKANPSVSSKTKQQQHFKPGKATKDKATTKCCTIS) is disordered. Cysteine 68 is lipidated: S-palmitoyl cysteine. Cysteine 69 bears the Cysteine methyl ester mark. The S-farnesyl cysteine moiety is linked to residue cysteine 69. A propeptide spans 70 to 72 (TIS) (removed in mature form).

Belongs to the G protein gamma family. In terms of assembly, g proteins are composed of 3 units, alpha, beta and gamma. Binding of the beta-gamma subunit complex (git5-git11) to the alpha subunit (gpa2) facilitates interaction with GPCR git3.

It localises to the cell membrane. In terms of biological role, gamma subunit of the heterotrimeric guanine nucleotide-binding protein (G protein) involved in glucose-induced cAMP signaling. The beta-gamma subunits (git5-git11) promote binding of the alpha subunit gpa2 to GPCR git3, which senses extracellular glucose, to activate cAMP-PKA signaling and repress sexual development and gluconeogenesis. The sequence is that of Guanine nucleotide-binding protein subunit gamma (git11) from Schizosaccharomyces pombe (strain 972 / ATCC 24843) (Fission yeast).